The following is a 250-amino-acid chain: 2,3-bisphosphoglycerate-dependent phosphoglycerate mutase (250 aa).

Substrate is bound by residues 8 to 15 (RHGQSAWN), 21 to 22 (TG), arginine 60, 87 to 90 (ERHY), lysine 98, 114 to 115 (RR), and 183 to 184 (GN). The active-site Tele-phosphohistidine intermediate is the histidine 9. Catalysis depends on glutamate 87, which acts as the Proton donor/acceptor.

Belongs to the phosphoglycerate mutase family. BPG-dependent PGAM subfamily. As to quaternary structure, homodimer.

It carries out the reaction (2R)-2-phosphoglycerate = (2R)-3-phosphoglycerate. It functions in the pathway carbohydrate degradation; glycolysis; pyruvate from D-glyceraldehyde 3-phosphate: step 3/5. Functionally, catalyzes the interconversion of 2-phosphoglycerate and 3-phosphoglycerate. The sequence is that of 2,3-bisphosphoglycerate-dependent phosphoglycerate mutase from Nitratidesulfovibrio vulgaris (strain DP4) (Desulfovibrio vulgaris).